We begin with the raw amino-acid sequence, 522 residues long: Target of rapamycin complex 2 subunit MAPKAP1 (522 aa).

The tract at residues 2-184 (GFLDNPTIIL…KKIDVYLPLH (183 aa)) is interaction with MAP3K2. The interaction with NBN stretch occupies residues 2–267 (GFLDNPTIIL…GFSTLALVEK (266 aa)). Thr-86 carries the phosphothreonine modification. Residues Ser-128, Ser-186, Ser-315, and Ser-356 each carry the phosphoserine modification. A CRIM domain is found at 139 to 267 (QSILSVRLEQ…GFSTLALVEK (129 aa)). Residues 279-353 (LFVRINAAHG…QSAWEFCLVR (75 aa)) are SIN1-type RBD. Residues 382–487 (HYKSFKVSMI…IVLKVNYILE (106 aa)) enclose the SIN1-type PH domain. Arg-393 is an a 1,2-diacyl-sn-glycero-3-phospho-(1D-myo-inositol-3,4,5-trisphosphate) binding site. Phosphothreonine is present on Thr-398. Residues Lys-428 and Lys-464 each coordinate a 1,2-diacyl-sn-glycero-3-phospho-(1D-myo-inositol-3,4,5-trisphosphate). Positions 468-522 (FESDAATVNEIVLKVNYILESRASTARADYFAQKQRKLNRRTSFSFQKEKKSGQQ) are interaction with ATF2. Phosphoserine is present on Ser-510.

This sequence belongs to the SIN1 family. In terms of assembly, component of the mechanistic target of rapamycin complex 2 (mTORC2), consisting in two heterotretramers composed of MTOR, MLST8, RICTOR and MAPKAP1/SIN1. The mTORC2 core complex associates with PRR5/PROTOR1 and/or PRR5L/PROTOR2. Contrary to mTORC1, mTORC2 does not bind to and is not sensitive to FKBP12-rapamycin. Interacts with MAP3K2. Interacts with ATF2. Interacts with MAPK8. Interacts with GTP-bound HRAS and KRAS; inhibiting their activity. Interacts with IFNAR2. Phosphorylation at Ser-128 by PKC promotes relocalization to the perinuclear region, where the mTORC2 complex specifically mediates phosphorylation of SGK1. Phosphorylated at Thr-86 by AKT1 or RPS6KB1 in the presence of growth factors; the effect of this phosphorylation is however unclear. According to two studies, phosphorylation at Thr-86 by AKT1 is part of a positive feedback loop that increases mTORC2 activation. According to another study, phosphorylation at Thr-86 and Thr-398 by RPS6KB1 promotes dissociation from the mTORC2 complex, leading to inhibit mTORC2 signaling. Present in the lumenal epithelium and glandular epithelium of endometrium (at protein level).

The protein resides in the cell membrane. It is found in the cytoplasmic vesicle. The protein localises to the endoplasmic reticulum membrane. Its subcellular location is the early endosome membrane. It localises to the late endosome membrane. The protein resides in the lysosome membrane. It is found in the golgi apparatus membrane. The protein localises to the mitochondrion outer membrane. Its subcellular location is the cytoplasm. It localises to the perinuclear region. The protein resides in the nucleus. Its activity is regulated as follows. Phosphatidylinositol 3,4,5-trisphosphate (PI(3,4,5)P3) promotes MTOR activation by relieving MAPKAP1/SIN1-mediated inhibition of MTOR that takes place in absence of PI(3,4,5)P3. Its function is as follows. Component of the mechanistic target of rapamycin complex 2 (mTORC2), which transduces signals from growth factors to pathways involved in proliferation, cytoskeletal organization, lipogenesis and anabolic output. In response to growth factors, mTORC2 phosphorylates and activates AGC protein kinase family members, including AKT (AKT1, AKT2 and AKT3), PKC (PRKCA, PRKCB and PRKCE) and SGK1. In contrast to mTORC1, mTORC2 is nutrient-insensitive. Within the mTORC2 complex, MAPKAP1/SIN1 acts as a substrate adapter which recognizes and binds AGC protein kinase family members for phosphorylation by MTOR. mTORC2 plays a critical role in AKT1 activation by mediating phosphorylation of different sites depending on the context, such as 'Thr-450', 'Ser-473', 'Ser-477' or 'Thr-479', facilitating the phosphorylation of the activation loop of AKT1 on 'Thr-308' by PDPK1/PDK1 which is a prerequisite for full activation. mTORC2 catalyzes the phosphorylation of SGK1 at 'Ser-422' and of PRKCA on 'Ser-657'. The mTORC2 complex also phosphorylates various proteins involved in insulin signaling, such as FBXW8 and IGF2BP1. mTORC2 acts upstream of Rho GTPases to regulate the actin cytoskeleton, probably by activating one or more Rho-type guanine nucleotide exchange factors. mTORC2 promotes the serum-induced formation of stress-fibers or F-actin. MAPKAP1 inhibits MAP3K2 by preventing its dimerization and autophosphorylation. Inhibits HRAS and KRAS independently of mTORC2 complex. Enhances osmotic stress-induced phosphorylation of ATF2 and ATF2-mediated transcription. Involved in ciliogenesis, regulates cilia length through its interaction with CCDC28B independently of mTORC2 complex. The chain is Target of rapamycin complex 2 subunit MAPKAP1 (MAPKAP1) from Ovis aries (Sheep).